Consider the following 334-residue polypeptide: Formamidase (334 aa).

The region spanning Phe-14–Pro-260 is the CN hydrolase domain. Glu-60 (proton acceptor) is an active-site residue. The active-site Proton donor is the Lys-133. Cys-166 (nucleophile) is an active-site residue.

This sequence belongs to the carbon-nitrogen hydrolase superfamily. Aliphatic amidase family.

The catalysed reaction is formamide + H2O = formate + NH4(+). Is an aliphatic amidase with a restricted substrate specificity, as it only hydrolyzes formamide. This Helicobacter pylori (strain P12) protein is Formamidase.